A 602-amino-acid polypeptide reads, in one-letter code: Elongation factor 4 (602 aa).

Positions 5–187 (DHIRNFSIIA…ALVKRIPAPK (183 aa)) constitute a tr-type G domain. Residues 17–22 (DHGKST) and 134–137 (NKID) each bind GTP.

It belongs to the TRAFAC class translation factor GTPase superfamily. Classic translation factor GTPase family. LepA subfamily.

It localises to the cell inner membrane. The catalysed reaction is GTP + H2O = GDP + phosphate + H(+). Required for accurate and efficient protein synthesis under certain stress conditions. May act as a fidelity factor of the translation reaction, by catalyzing a one-codon backward translocation of tRNAs on improperly translocated ribosomes. Back-translocation proceeds from a post-translocation (POST) complex to a pre-translocation (PRE) complex, thus giving elongation factor G a second chance to translocate the tRNAs correctly. Binds to ribosomes in a GTP-dependent manner. The polypeptide is Elongation factor 4 (Zymomonas mobilis subsp. mobilis (strain ATCC 31821 / ZM4 / CP4)).